Consider the following 843-residue polypeptide: Protein P (843 aa).

The segment at M1–Q177 is terminal protein domain (TP). The tract at residues D178–I346 is spacer. Residues R219 to S250 form a disordered region. Low complexity predominate over residues L223–R235. Residues E347–Q690 form a polymerase/reverse transcriptase domain (RT) region. The Reverse transcriptase domain occupies E357–I600. Mg(2+) is bound by residues D429, D551, and D552.

The protein belongs to the hepadnaviridae P protein family.

It carries out the reaction DNA(n) + a 2'-deoxyribonucleoside 5'-triphosphate = DNA(n+1) + diphosphate. It catalyses the reaction Endonucleolytic cleavage to 5'-phosphomonoester.. With respect to regulation, activated by host HSP70 and HSP40 in vitro to be able to bind the epsilon loop of the pgRNA. Because deletion of the RNase H region renders the protein partly chaperone-independent, the chaperones may be needed indirectly to relieve occlusion of the RNA-binding site by this domain. Inhibited by several reverse-transcriptase inhibitors: Lamivudine, Adefovir and Entecavir. Multifunctional enzyme that converts the viral RNA genome into dsDNA in viral cytoplasmic capsids. This enzyme displays a DNA polymerase activity that can copy either DNA or RNA templates, and a ribonuclease H (RNase H) activity that cleaves the RNA strand of RNA-DNA heteroduplexes in a partially processive 3'- to 5'-endonucleasic mode. Neo-synthesized pregenomic RNA (pgRNA) are encapsidated together with the P protein, and reverse-transcribed inside the nucleocapsid. Initiation of reverse-transcription occurs first by binding the epsilon loop on the pgRNA genome, and is initiated by protein priming, thereby the 5'-end of (-)DNA is covalently linked to P protein. Partial (+)DNA is synthesized from the (-)DNA template and generates the relaxed circular DNA (RC-DNA) genome. After budding and infection, the RC-DNA migrates in the nucleus, and is converted into a plasmid-like covalently closed circular DNA (cccDNA). The activity of P protein does not seem to be necessary for cccDNA generation, and is presumably released from (+)DNA by host nuclear DNA repair machinery. This is Protein P from Hepatitis B virus genotype B2 (isolate Vietnam/16091/1992) (HBV-B).